The primary structure comprises 295 residues: F-box only protein 8 (295 aa).

Residues 35 to 80 (TWVARYIPQDLLIEILTRLPPKSVMRFKCVSKFWSSLLSSRYFCNR) form the F-box domain.

The chain is F-box only protein 8 (FBX8) from Arabidopsis thaliana (Mouse-ear cress).